The primary structure comprises 118 residues: Small ribosomal subunit protein uS13 (118 aa).

The segment at 94 to 118 (GLPVRGQRTKTNARTRKGPRKPIKK) is disordered.

This sequence belongs to the universal ribosomal protein uS13 family. In terms of assembly, part of the 30S ribosomal subunit. Forms a loose heterodimer with protein S19. Forms two bridges to the 50S subunit in the 70S ribosome.

Located at the top of the head of the 30S subunit, it contacts several helices of the 16S rRNA. In the 70S ribosome it contacts the 23S rRNA (bridge B1a) and protein L5 of the 50S subunit (bridge B1b), connecting the 2 subunits; these bridges are implicated in subunit movement. Contacts the tRNAs in the A and P-sites. The polypeptide is Small ribosomal subunit protein uS13 (Pasteurella multocida (strain Pm70)).